Consider the following 407-residue polypeptide: V-set and immunoglobulin domain-containing protein 1 (407 aa).

An N-terminal signal peptide occupies residues 1-22 (MMVFAFWKVFLILNCLAGQVSM). The region spanning 23–134 (VQVTIPDTFV…HFVGKNQGLL (112 aa)) is the Ig-like V-type domain. The Extracellular portion of the chain corresponds to 23–234 (VQVTIPDTFV…EIDLTSSHPE (212 aa)). Asparagine 39 carries N-linked (GlcNAc...) asparagine glycosylation. Disulfide bonds link cysteine 44–cysteine 118 and cysteine 163–cysteine 213. The region spanning 145–229 (PFCTIQGRPE…GNSSCEIDLT (85 aa)) is the Ig-like C2-type domain. N-linked (GlcNAc...) asparagine glycosylation is found at asparagine 202 and asparagine 221. Residues 235 to 255 (VGIIIGALVGALIGAAVIICV) traverse the membrane as a helical segment. At 256 to 407 (VYFARNKVKS…SKAGEDTVKA (152 aa)) the chain is on the cytoplasmic side. Disordered regions lie at residues 268-289 (QKNLNSSTELEPMTKVHHPQQS) and 318-407 (TAVL…TVKA). Phosphoserine is present on residues serine 273 and serine 274. Residues 361–371 (DPETETEPEPE) are compositionally biased toward acidic residues.

Its subcellular location is the membrane. This chain is V-set and immunoglobulin domain-containing protein 1 (Vsig1), found in Mus musculus (Mouse).